Here is a 177-residue protein sequence, read N- to C-terminus: Large ribosomal subunit protein uL6 (177 aa).

Belongs to the universal ribosomal protein uL6 family. In terms of assembly, part of the 50S ribosomal subunit.

In terms of biological role, this protein binds to the 23S rRNA, and is important in its secondary structure. It is located near the subunit interface in the base of the L7/L12 stalk, and near the tRNA binding site of the peptidyltransferase center. In Neisseria gonorrhoeae (strain ATCC 700825 / FA 1090), this protein is Large ribosomal subunit protein uL6.